The sequence spans 432 residues: Adenosylhomocysteinase (432 aa).

Substrate-binding residues include Thr-56, Asp-131, and Glu-156. 157 to 159 (TTT) lines the NAD(+) pocket. Residues Lys-186 and Asp-190 each contribute to the substrate site. NAD(+) is bound by residues Asn-191, 222–227 (GDVGKG), Glu-243, 299–301 (IGH), and Asn-346.

Belongs to the adenosylhomocysteinase family. It depends on NAD(+) as a cofactor.

It carries out the reaction S-adenosyl-L-homocysteine + H2O = L-homocysteine + adenosine. It functions in the pathway amino-acid biosynthesis; L-homocysteine biosynthesis; L-homocysteine from S-adenosyl-L-homocysteine: step 1/1. In terms of biological role, adenosylhomocysteine is a competitive inhibitor of S-adenosyl-L-methionine-dependent methyl transferase reactions; therefore adenosylhomocysteinase may play a key role in the control of methylations via regulation of the intracellular concentration of adenosylhomocysteine. The protein is Adenosylhomocysteinase (Ahcy13) of Anopheles gambiae (African malaria mosquito).